The primary structure comprises 873 residues: Zinc fingers and homeoboxes protein 1 (873 aa).

The tract at residues 24–63 is disordered; that stretch reads LISDLDEGPPVLTPVENTRAESISSDEEVHESVDSDNQQN. At T36 the chain carries Phosphothreonine. Phosphoserine occurs at positions 45, 47, and 48. 2 C2H2-type zinc fingers span residues 70–93 and 102–125; these read YECK…DSEH and YVCV…LKYH. A Glycyl lysine isopeptide (Lys-Gly) (interchain with G-Cter in SUMO2) cross-link involves residue K159. The segment at 200-236 is disordered; sequence HNSVEDVPEEKENEIKPDREEIVENPSSSASESNTST. Phosphoserine is present on S202. A compositionally biased stretch (basic and acidic residues) spans 212–221; it reads NEIKPDREEI. Low complexity predominate over residues 223–236; sequence ENPSSSASESNTST. The required for dimerization stretch occupies residues 272 to 432; that stretch reads NSNLIPKVLI…QNNIQKSQVP (161 aa). A required for interaction with NFYA region spans residues 272-564; the sequence is NSNLIPKVLI…AQPKQSWNPF (293 aa). The homeobox 1 DNA-binding region spans 284-346; it reads NSIPTYNAAL…LKHGVSWTPE (63 aa). Residues K441, K454, K485, and K629 each participate in a glycyl lysine isopeptide (Lys-Gly) (interchain with G-Cter in SUMO2) cross-link. 2 DNA-binding regions (homeobox) span residues 464-526 and 569-630; these read SFGI…KSNQ and PQKF…EEKM. 2 disordered regions span residues 626–667 and 732–769; these read KEEK…ICKK and SSMN…INNW. The residue at position 648 (S648) is a Phosphoserine. A DNA-binding region (homeobox 4) is located at residues 660–722; sequence STGKICKKTP…YAWKNGNLKW (63 aa). The required for nuclear localization stretch occupies residues 734-768; it reads MNGLSSLRKRGRGRPKGRGRGRPRGRPRGSKRINN. Basic residues predominate over residues 740–764; sequence LRKRGRGRPKGRGRGRPRGRPRGSK. Position 774 is a phosphoserine (S774). The homeobox 5 DNA-binding region spans 777–832; that stretch reads KFKTGTAILKDYYLKHKFLNEQDLDELVNKSHMGYEQVREWFAERQRRSELGIELF. Positions 829–873 are disordered; it reads IELFEENEEEDEVIDDQEEDEEETDDSDTWEPPRHVKRKLSKSDD. Positions 831-857 are enriched in acidic residues; that stretch reads LFEENEEEDEVIDDQEEDEEETDDSDT. Positions 831 to 873 are required for repressor activity; that stretch reads LFEENEEEDEVIDDQEEDEEETDDSDTWEPPRHVKRKLSKSDD. The span at 863–873 shows a compositional bias: basic residues; the sequence is HVKRKLSKSDD.

Belongs to the ZHX family. As to quaternary structure, forms homodimers. Heterodimer (via HD1 domain) with ZHX2 (via HD1 domain). Also forms a heterodimer with ZHX3 which is a prerequisite for repressor activity. Interacts with ATF7IP and NFYA. Interacts (via homeobox domains) with DNMT3B (via PWWP domain).

It localises to the nucleus. Acts as a transcriptional repressor. Increases DNMT3B-mediated repressive transcriptional activity when DNMT3B is tethered to DNA. May link molecule between DNMT3B and other co-repressor proteins. This chain is Zinc fingers and homeoboxes protein 1 (ZHX1), found in Pan troglodytes (Chimpanzee).